The sequence spans 205 residues: Outer-membrane lipoprotein carrier protein (205 aa).

The signal sequence occupies residues 1 to 22; the sequence is MKKIVIVISILLTSFLSSAVSA.

Belongs to the LolA family. In terms of assembly, monomer.

It localises to the periplasm. Functionally, participates in the translocation of lipoproteins from the inner membrane to the outer membrane. Only forms a complex with a lipoprotein if the residue after the N-terminal Cys is not an aspartate (The Asp acts as a targeting signal to indicate that the lipoprotein should stay in the inner membrane). This chain is Outer-membrane lipoprotein carrier protein, found in Psychromonas ingrahamii (strain DSM 17664 / CCUG 51855 / 37).